The primary structure comprises 63 residues: U-reduvitoxin-Pr9a (63 aa).

The signal sequence occupies residues 1 to 19 (MRFFSLFTFLVAFIAAALA). A propeptide spanning residues 20 to 42 (APVEIGEDLFALRPTGAKRDIIL) is cleaved from the precursor. C47 and C60 form a disulfide bridge.

In terms of tissue distribution, expressed by the venom gland.

It localises to the secreted. This is U-reduvitoxin-Pr9a from Platymeris rhadamanthus (Red spot assassin bug).